Reading from the N-terminus, the 192-residue chain is Phosphoheptose isomerase (192 aa).

The 156-residue stretch at 37-192 folds into the SIS domain; that stretch reads LADSFKGGGK…IQLIEKEMVK (156 aa). 52–54 lines the substrate pocket; sequence NGG. 2 residues coordinate Zn(2+): histidine 61 and glutamate 65. Substrate-binding positions include glutamate 65, 93 to 94, 119 to 121, serine 124, and glutamine 172; these read ND and STS. Positions 172 and 180 each coordinate Zn(2+).

Belongs to the SIS family. GmhA subfamily. As to quaternary structure, homotetramer. Zn(2+) is required as a cofactor.

The protein localises to the cytoplasm. The enzyme catalyses 2 D-sedoheptulose 7-phosphate = D-glycero-alpha-D-manno-heptose 7-phosphate + D-glycero-beta-D-manno-heptose 7-phosphate. It functions in the pathway carbohydrate biosynthesis; D-glycero-D-manno-heptose 7-phosphate biosynthesis; D-glycero-alpha-D-manno-heptose 7-phosphate and D-glycero-beta-D-manno-heptose 7-phosphate from sedoheptulose 7-phosphate: step 1/1. Its function is as follows. Catalyzes the isomerization of sedoheptulose 7-phosphate in D-glycero-D-manno-heptose 7-phosphate. This is Phosphoheptose isomerase from Escherichia coli O7:K1 (strain IAI39 / ExPEC).